The primary structure comprises 344 residues: Protein RecA (344 aa).

66–73 is a binding site for ATP; that stretch reads GPESSGKT.

Belongs to the RecA family.

The protein localises to the cytoplasm. Its function is as follows. Can catalyze the hydrolysis of ATP in the presence of single-stranded DNA, the ATP-dependent uptake of single-stranded DNA by duplex DNA, and the ATP-dependent hybridization of homologous single-stranded DNAs. It interacts with LexA causing its activation and leading to its autocatalytic cleavage. This chain is Protein RecA, found in Methylobacillus flagellatus.